Consider the following 62-residue polypeptide: Synergistic-type venom protein C8S2, chain 1 (62 aa).

Intrachain disulfides connect cysteine 3-cysteine 24, cysteine 17-cysteine 42, and cysteine 46-cysteine 57.

Belongs to the three-finger toxin family. Short-chain subfamily. Aminergic toxin sub-subfamily. In terms of assembly, heterodimer of C8S2 chain 1 and chain 2 (AC P01411); disulfide-linked. In terms of tissue distribution, expressed by the venom gland.

It localises to the secreted. In terms of biological role, this protein shows a synergetic toxic effect in that it enhances the toxicity of other toxins. This is Synergistic-type venom protein C8S2, chain 1 from Dendroaspis angusticeps (Eastern green mamba).